The following is a 90-amino-acid chain: MEVKTFAFLQIAVLIAFSLHSASAGSKQPGAAGSSSDSVEAVFCPTNCTKGTNGAWSGCSDDCICVHVGENTEGSCMKFSGDYDYPTPEA.

Positions 1–24 (MEVKTFAFLQIAVLIAFSLHSASA) are cleaved as a signal peptide. Disulfide bonds link Cys44–Cys63, Cys48–Cys65, and Cys59–Cys76. An N-linked (GlcNAc...) asparagine glycan is attached at Asn47.

The protein resides in the secreted. Functionally, salivary chemokine-binding protein which binds to host chemokines CXCL1, CXCL2, CXCL3, CXCL5, CXCL6 and CXCL13. The polypeptide is Evasin P458 (Ixodes ricinus (Common tick)).